Here is a 283-residue protein sequence, read N- to C-terminus: Eukaryotic translation initiation factor 3 subunit K (283 aa).

Positions 52-263 (YDLLANLAIL…EIKATVIREE (212 aa)) constitute a PCI domain. A disordered region spans residues 114–135 (EATTTDADNAGSLSGDDDDDEV).

This sequence belongs to the eIF-3 subunit K family. In terms of assembly, component of the eukaryotic translation initiation factor 3 (eIF-3) complex.

It localises to the cytoplasm. Functionally, component of the eukaryotic translation initiation factor 3 (eIF-3) complex, which is involved in protein synthesis of a specialized repertoire of mRNAs and, together with other initiation factors, stimulates binding of mRNA and methionyl-tRNAi to the 40S ribosome. The eIF-3 complex specifically targets and initiates translation of a subset of mRNAs involved in cell proliferation. This is Eukaryotic translation initiation factor 3 subunit K from Mycosarcoma maydis (Corn smut fungus).